The sequence spans 133 residues: Fluoride-specific ion channel FluC 3 (133 aa).

Transmembrane regions (helical) follow at residues 7–27 (ILVL…SGYV), 37–57 (WGTF…AGLG), and 60–80 (LGAI…LLGG). Na(+)-binding residues include Gly79 and Thr82. Residues 107-127 (IVASALLCVLAVAAGYGGIMW) form a helical membrane-spanning segment.

It belongs to the fluoride channel Fluc/FEX (TC 1.A.43) family.

The protein resides in the cell inner membrane. It carries out the reaction fluoride(in) = fluoride(out). Its activity is regulated as follows. Na(+) is not transported, but it plays an essential structural role and its presence is essential for fluoride channel function. In terms of biological role, fluoride-specific ion channel. Important for reducing fluoride concentration in the cell, thus reducing its toxicity. In Brucella suis biovar 1 (strain 1330), this protein is Fluoride-specific ion channel FluC 3.